Reading from the N-terminus, the 315-residue chain is MTIDSGFNHITVLLDEAVEALALRADGCYLDGTFGRGGHSRLILSKLGPQGRLLGFDKDPQAIATGQALAAEDGRFVIVQRSFAELGAEVAERGLAGKVSGILLDLGVSSPQLDDPERGFSFLNDGPLDMRMNPDQGISAAEFIATAPVEEIARVFKEYGEERFAGRMARAVVERREKQPFTRTADLAEVLKVANPAWEKGKNPATRAFQGLRIHVNNELGDLEAGLEAALDALEVGGRLAVISFHSLEDRIVKLFMRKLVKGEADNLPRNLPVQHKVFEPKIRLIGKAQFASEAELKANPRSRSAVMRVAEKLR.

Residues 37–39 (GGH), aspartate 57, phenylalanine 83, aspartate 105, and glutamine 112 contribute to the S-adenosyl-L-methionine site.

The protein belongs to the methyltransferase superfamily. RsmH family.

It localises to the cytoplasm. The catalysed reaction is cytidine(1402) in 16S rRNA + S-adenosyl-L-methionine = N(4)-methylcytidine(1402) in 16S rRNA + S-adenosyl-L-homocysteine + H(+). Functionally, specifically methylates the N4 position of cytidine in position 1402 (C1402) of 16S rRNA. In Pseudomonas putida (strain W619), this protein is Ribosomal RNA small subunit methyltransferase H.